Here is a 270-residue protein sequence, read N- to C-terminus: Glucosamine-6-phosphate deaminase (270 aa).

Residue Asp68 is the Proton acceptor; for enolization step of the active site. The active-site For ring-opening step is the Asp145. His147 acts as the Proton acceptor; for ring-opening step in catalysis. Glu152 functions as the For ring-opening step in the catalytic mechanism.

This sequence belongs to the glucosamine/galactosamine-6-phosphate isomerase family. NagB subfamily.

It catalyses the reaction alpha-D-glucosamine 6-phosphate + H2O = beta-D-fructose 6-phosphate + NH4(+). The protein operates within amino-sugar metabolism; N-acetylneuraminate degradation; D-fructose 6-phosphate from N-acetylneuraminate: step 5/5. Its function is as follows. Catalyzes the reversible isomerization-deamination of glucosamine 6-phosphate (GlcN6P) to form fructose 6-phosphate (Fru6P) and ammonium ion. The sequence is that of Glucosamine-6-phosphate deaminase from Bifidobacterium longum (strain NCC 2705).